A 213-amino-acid polypeptide reads, in one-letter code: Imidazoleglycerol-phosphate dehydratase (213 aa).

It belongs to the imidazoleglycerol-phosphate dehydratase family.

The protein resides in the cytoplasm. It catalyses the reaction D-erythro-1-(imidazol-4-yl)glycerol 3-phosphate = 3-(imidazol-4-yl)-2-oxopropyl phosphate + H2O. The protein operates within amino-acid biosynthesis; L-histidine biosynthesis; L-histidine from 5-phospho-alpha-D-ribose 1-diphosphate: step 6/9. In Trichodesmium erythraeum (strain IMS101), this protein is Imidazoleglycerol-phosphate dehydratase.